Reading from the N-terminus, the 664-residue chain is Methionine--tRNA ligase (664 aa).

A 'HIGH' region motif is present at residues 15-25 (YYPSGKAHIGH). The 'KMSKS' region signature appears at 310 to 314 (KMSKS). Residue K313 coordinates ATP. Residues 563–664 (DFDKIDLRVA…SALPNGAKVK (102 aa)) enclose the tRNA-binding domain.

This sequence belongs to the class-I aminoacyl-tRNA synthetase family. MetG type 2B subfamily. Homodimer.

The protein localises to the cytoplasm. It carries out the reaction tRNA(Met) + L-methionine + ATP = L-methionyl-tRNA(Met) + AMP + diphosphate. In terms of biological role, is required not only for elongation of protein synthesis but also for the initiation of all mRNA translation through initiator tRNA(fMet) aminoacylation. This is Methionine--tRNA ligase (metG) from Listeria innocua serovar 6a (strain ATCC BAA-680 / CLIP 11262).